Consider the following 283-residue polypeptide: Protoheme IX farnesyltransferase (283 aa).

Helical transmembrane passes span 6 to 26 (LLLTKPGIILGNLVTVMAGFL), 35 to 55 (FGLFFSTILGLAFIMASGCVF), 85 to 105 (AIVFGLALAIVGAIILYFYTN), 106 to 126 (LLTLVIAELGFIIYVFFYSIW), 131 to 151 (VYGTAIGSLAGAVPPLVGYCA), 160 to 180 (AFILFAMMVFWQMPHFFSIAI), 207 to 227 (ILLYIIIFTLTSSLLTFFHFT), 230 to 250 (LYLILTIGLGLTWLLMGLRGL), and 262 to 282 (MFRFSLVIISVLSLTIPFDLV).

The protein belongs to the UbiA prenyltransferase family. Protoheme IX farnesyltransferase subfamily.

It localises to the cell inner membrane. It catalyses the reaction heme b + (2E,6E)-farnesyl diphosphate + H2O = Fe(II)-heme o + diphosphate. Its pathway is porphyrin-containing compound metabolism; heme O biosynthesis; heme O from protoheme: step 1/1. Its function is as follows. Converts heme B (protoheme IX) to heme O by substitution of the vinyl group on carbon 2 of heme B porphyrin ring with a hydroxyethyl farnesyl side group. This is Protoheme IX farnesyltransferase from Protochlamydia amoebophila (strain UWE25).